Here is a 109-residue protein sequence, read N- to C-terminus: Aquaporin-2 (109 aa).

Residues 1–6 are Cytoplasmic-facing; the sequence is SIAFSR. The helical transmembrane segment at 7-27 threads the bilayer; that stretch reads AVFSEFLATLLFVFFGLGSAL. The Extracellular portion of the chain corresponds to 28–35; the sequence is NWPQALPS. A helical transmembrane segment spans residues 36-54; that stretch reads VLQIAMAFGLAIGTLVQTL. At 55 to 59 the chain is on the cytoplasmic side; sequence GHISG. The segment at residues 60–69 is an intramembrane region (discontinuously helical); sequence AHINPAVTVA. The NPA 1 signature appears at 63–65; that stretch reads NPA. Residues 70–80 lie on the Cytoplasmic side of the membrane; sequence CLVGCHVSFLR. The chain crosses the membrane as a helical span at residues 81–102; sequence ATFYLAAQLLGAVAGAALLHEL. The Extracellular segment spans residues 103–109; it reads TPPDIRG.

It belongs to the MIP/aquaporin (TC 1.A.8) family. In terms of assembly, homotetramer. Post-translationally, serine phosphorylation is necessary and sufficient for expression at the apical membrane. Endocytosis is not phosphorylation-dependent. In terms of processing, N-glycosylated.

Its subcellular location is the apical cell membrane. The protein resides in the basolateral cell membrane. The protein localises to the cell membrane. It is found in the cytoplasmic vesicle membrane. It localises to the golgi apparatus. Its subcellular location is the trans-Golgi network membrane. It catalyses the reaction H2O(in) = H2O(out). It carries out the reaction glycerol(in) = glycerol(out). Forms a water-specific channel that provides the plasma membranes of renal collecting duct with high permeability to water, thereby permitting water to move in the direction of an osmotic gradient. Plays an essential role in renal water homeostasis. Could also be permeable to glycerol. The chain is Aquaporin-2 from Elephas maximus (Indian elephant).